The primary structure comprises 666 residues: Endogenous retrovirus group K member 10 Gag polyprotein (666 aa).

Gly2 carries the N-myristoyl glycine lipid modification. Residues 164–183 (EGKGPELMGPSESKPRGTSP) are disordered. 2 consecutive CCHC-type zinc fingers follow at residues 544 to 561 (GKCYNCGQIGHLKKNCPV) and 580 to 597 (DLCPRCKKGKHWASQCRS). The interval 598 to 642 (KFDKNGQPLSGNEQRGQPQAPQQTGAFPIQPFVPQGFQGQQPPLS) is disordered. Positions 604 to 622 (QPLSGNEQRGQPQAPQQTG) are enriched in polar residues. The segment covering 624–640 (FPIQPFVPQGFQGQQPP) has biased composition (low complexity).

The protein belongs to the beta type-B retroviral Gag protein family. HERV class-II K(HML-2) gag subfamily. In terms of processing, myristoylation is essential for retroviral assembly. Alteration of the glycine residue leads to a block in the budding of particles and an accumulation of Gag inside the cell. Specific enzymatic cleavages may yield mature proteins.

It is found in the cell membrane. The products of the Gag polyproteins of infectious retroviruses perform highly complex orchestrated tasks during the assembly, budding, maturation, and infection stages of the viral replication cycle. During viral assembly, the proteins form membrane associations and self-associations that ultimately result in budding of an immature virion from the infected cell. Gag precursors also function during viral assembly to selectively bind and package two plus strands of genomic RNA. Endogenous Gag proteins may have kept, lost or modified their original function during evolution. The polypeptide is Endogenous retrovirus group K member 10 Gag polyprotein (ERVK-10) (Homo sapiens (Human)).